We begin with the raw amino-acid sequence, 181 residues long: Ribulose bisphosphate carboxylase small subunit 3B, chloroplastic (181 aa).

The transit peptide at 1 to 54 directs the protein to the chloroplast; sequence MASSMLSSAAVVTSPAQATMVAPFTGLKSSAAFPVTRKTNKDITSIASNGGRVS.

Belongs to the RuBisCO small chain family. In terms of assembly, heterohexadecamer of 8 large and 8 small subunits.

It is found in the plastid. It localises to the chloroplast. RuBisCO catalyzes two reactions: the carboxylation of D-ribulose 1,5-bisphosphate, the primary event in carbon dioxide fixation, as well as the oxidative fragmentation of the pentose substrate. Both reactions occur simultaneously and in competition at the same active site. Although the small subunit is not catalytic it is essential for maximal activity. This is Ribulose bisphosphate carboxylase small subunit 3B, chloroplastic (RBCS-3B) from Arabidopsis thaliana (Mouse-ear cress).